A 267-amino-acid chain; its full sequence is Glutamate 5-kinase (267 aa).

Lysine 14 serves as a coordination point for ATP. Substrate contacts are provided by serine 54, aspartate 141, and asparagine 157. Residues 177–178 (SD) and 219–225 (TGGMMSK) contribute to the ATP site.

Belongs to the glutamate 5-kinase family.

It localises to the cytoplasm. The enzyme catalyses L-glutamate + ATP = L-glutamyl 5-phosphate + ADP. It participates in amino-acid biosynthesis; L-proline biosynthesis; L-glutamate 5-semialdehyde from L-glutamate: step 1/2. Catalyzes the transfer of a phosphate group to glutamate to form L-glutamate 5-phosphate. This chain is Glutamate 5-kinase, found in Streptococcus thermophilus.